Here is a 202-residue protein sequence, read N- to C-terminus: Superoxide dismutase [Mn] (202 aa).

Residues His-27, His-82, Asp-164, and His-168 each coordinate Mn(2+).

It belongs to the iron/manganese superoxide dismutase family. In terms of assembly, homodimer. Mn(2+) serves as cofactor.

The catalysed reaction is 2 superoxide + 2 H(+) = H2O2 + O2. Functionally, destroys superoxide anion radicals which are normally produced within the cells and which are toxic to biological systems. In Listeria innocua serovar 6a (strain ATCC BAA-680 / CLIP 11262), this protein is Superoxide dismutase [Mn] (sodA).